The chain runs to 518 residues: Protease Do-like 4, mitochondrial (518 aa).

Residues 1-23 (MLFRFLQTLARFCRFLLISVLGF) constitute a mitochondrion transit peptide. A serine protease region spans residues 98 to 262 (ESGGSGFVIS…IPTPVIKHFL (165 aa)). Residues H116, D147, and S225 each act as charge relay system in the active site. One can recognise a PDZ domain in the interval 278-358 (DISYQLMENS…HFVSMKKLDE (81 aa)).

It belongs to the peptidase S1C family.

It is found in the mitochondrion membrane. In terms of biological role, putative serine protease. The protein is Protease Do-like 4, mitochondrial (DEGP4) of Arabidopsis thaliana (Mouse-ear cress).